The primary structure comprises 204 residues: Superoxide dismutase [Mn] (204 aa).

His-27 contributes to the Mn(2+) binding site. 2 positions are modified to phosphothreonine: Thr-34 and Thr-70. Residues His-82, Asp-164, and His-168 each coordinate Mn(2+).

It belongs to the iron/manganese superoxide dismutase family. In terms of assembly, homodimer. It depends on Mn(2+) as a cofactor.

The enzyme catalyses 2 superoxide + 2 H(+) = H2O2 + O2. In terms of biological role, destroys superoxide anion radicals which are normally produced within the cells and which are toxic to biological systems. This chain is Superoxide dismutase [Mn] (sodA), found in Bacillus caldotenax.